An 83-amino-acid chain; its full sequence is MENDAGESVDLYCPRKCSASNRIIHAKDHASVQLNIVDVDPETGRMTVGSKTYAICGEIRRMGESDDCIVRLAKKDGLITKAF.

It belongs to the eukaryotic ribosomal protein eS21 family. In terms of assembly, component of the 40S small ribosomal subunit. Interacts with sta.

It is found in the cytoplasm. The protein resides in the cytosol. Its subcellular location is the rough endoplasmic reticulum. The chain is Small ribosomal subunit protein eS21 (RpS21) from Ceratitis capitata (Mediterranean fruit fly).